A 205-amino-acid chain; its full sequence is uncharacterized protein (205 aa).

Residues 1–25 are compositionally biased toward polar residues; sequence MSNNNNEAQQPVESTNVESQQNVVQ. The segment at 1–205 is disordered; that stretch reads MSNNNNEAQQ…TSDPAQQVEA (205 aa). Over residues 32–79 the composition is skewed to low complexity; sequence NENNDNNNNNNNNNNNNNNNNNNNNNNNNSNNNNNSSNNENNENNENN. Positions 80-122 are enriched in basic and acidic residues; that stretch reads SCEKSEQEKPKEPEEPVQEEKSKEPCDQQKVKENEPAEEKETE. Composition is skewed to low complexity over residues 123–132 and 146–162; these read PAAPVEPENP and QHQQ…NGES. Positions 170-185 are enriched in basic and acidic residues; the sequence is SENKKRSIDEAGDIKD. The span at 194-205 shows a compositional bias: polar residues; that stretch reads VETSDPAQQVEA.

This is an uncharacterized protein from Dictyostelium discoideum (Social amoeba).